A 265-amino-acid polypeptide reads, in one-letter code: 3'(2'),5'-bisphosphate nucleotidase CysQ (265 aa).

Residues glutamate 80, aspartate 99, leucine 101, aspartate 102, and aspartate 222 each coordinate Mg(2+). Glutamate 80 provides a ligand contact to substrate. Substrate contacts are provided by residues 101–104 and aspartate 222; that span reads LDGT.

The protein belongs to the inositol monophosphatase superfamily. CysQ family. The cofactor is Mg(2+).

The protein localises to the cell inner membrane. The enzyme catalyses adenosine 3',5'-bisphosphate + H2O = AMP + phosphate. In terms of biological role, converts adenosine-3',5'-bisphosphate (PAP) to AMP. This Buchnera aphidicola subsp. Acyrthosiphon pisum (strain APS) (Acyrthosiphon pisum symbiotic bacterium) protein is 3'(2'),5'-bisphosphate nucleotidase CysQ.